The chain runs to 269 residues: Tryptophan synthase alpha chain (269 aa).

Residues Glu50 and Asp61 each act as proton acceptor in the active site.

This sequence belongs to the TrpA family. Tetramer of two alpha and two beta chains.

The enzyme catalyses (1S,2R)-1-C-(indol-3-yl)glycerol 3-phosphate + L-serine = D-glyceraldehyde 3-phosphate + L-tryptophan + H2O. The protein operates within amino-acid biosynthesis; L-tryptophan biosynthesis; L-tryptophan from chorismate: step 5/5. In terms of biological role, the alpha subunit is responsible for the aldol cleavage of indoleglycerol phosphate to indole and glyceraldehyde 3-phosphate. The polypeptide is Tryptophan synthase alpha chain (Francisella tularensis subsp. holarctica (strain FTNF002-00 / FTA)).